The primary structure comprises 265 residues: GTP cyclohydrolase FolE2 (265 aa).

This sequence belongs to the GTP cyclohydrolase IV family.

The catalysed reaction is GTP + H2O = 7,8-dihydroneopterin 3'-triphosphate + formate + H(+). It functions in the pathway cofactor biosynthesis; 7,8-dihydroneopterin triphosphate biosynthesis; 7,8-dihydroneopterin triphosphate from GTP: step 1/1. Its function is as follows. Converts GTP to 7,8-dihydroneopterin triphosphate. This Magnetococcus marinus (strain ATCC BAA-1437 / JCM 17883 / MC-1) protein is GTP cyclohydrolase FolE2.